The sequence spans 147 residues: Large ribosomal subunit protein uL16 (147 aa).

Over residues 1-16 the composition is skewed to basic residues; the sequence is MLMPKRVKRRRVHRGR. A disordered region spans residues 1–20; sequence MLMPKRVKRRRVHRGRMTGQ.

This sequence belongs to the universal ribosomal protein uL16 family. Part of the 50S ribosomal subunit.

Functionally, binds 23S rRNA and is also seen to make contacts with the A and possibly P site tRNAs. The protein is Large ribosomal subunit protein uL16 of Alkaliphilus metalliredigens (strain QYMF).